Consider the following 215-residue polypeptide: Glutathione S-transferase D6 (215 aa).

One can recognise a GST N-terminal domain in the interval Met1–Asp80. Glutathione-binding positions include Ser9, His50–Ile52, and Glu64–Arg66. In terms of domain architecture, GST C-terminal spans Asp86–Phe206.

It belongs to the GST superfamily. Delta family. In terms of assembly, homodimer.

The enzyme catalyses RX + glutathione = an S-substituted glutathione + a halide anion + H(+). Its function is as follows. Conjugation of reduced glutathione to a wide number of exogenous and endogenous hydrophobic electrophiles. May be involved in detoxification. The sequence is that of Glutathione S-transferase D6 from Drosophila melanogaster (Fruit fly).